Reading from the N-terminus, the 344-residue chain is Phenylalanine--tRNA ligase alpha subunit (344 aa).

Glu258 contributes to the Mg(2+) binding site.

This sequence belongs to the class-II aminoacyl-tRNA synthetase family. Phe-tRNA synthetase alpha subunit type 1 subfamily. In terms of assembly, tetramer of two alpha and two beta subunits. Requires Mg(2+) as cofactor.

It is found in the cytoplasm. The catalysed reaction is tRNA(Phe) + L-phenylalanine + ATP = L-phenylalanyl-tRNA(Phe) + AMP + diphosphate + H(+). The sequence is that of Phenylalanine--tRNA ligase alpha subunit from Thiobacillus denitrificans (strain ATCC 25259 / T1).